The sequence spans 447 residues: GTPase Der (447 aa).

EngA-type G domains follow at residues P3–R167 and V181–M354. GTP-binding positions include G9–S16, D56–F60, N119–E122, G187–S194, D234–L238, and N299–D302. Residues V355–K439 enclose the KH-like domain.

This sequence belongs to the TRAFAC class TrmE-Era-EngA-EngB-Septin-like GTPase superfamily. EngA (Der) GTPase family. As to quaternary structure, associates with the 50S ribosomal subunit.

Functionally, GTPase that plays an essential role in the late steps of ribosome biogenesis. This Cupriavidus pinatubonensis (strain JMP 134 / LMG 1197) (Cupriavidus necator (strain JMP 134)) protein is GTPase Der.